Here is a 73-residue protein sequence, read N- to C-terminus: Kappa-scoloptoxin(03)-Ssm1b (73 aa).

An N-terminal signal peptide occupies residues 1 to 23 (MKPSMAILLVIALIIFSLDKSYS). 3 disulfides stabilise this stretch: C32/C58, C41/C57, and C44/C67.

In terms of processing, contains 3 disulfide bonds. Expressed by the venom gland.

Its subcellular location is the secreted. Inhibits voltage-gated potassium channels. This chain is Kappa-scoloptoxin(03)-Ssm1b, found in Scolopendra mutilans (Chinese red-headed centipede).